The primary structure comprises 231 residues: Putative carboxymethylenebutenolidase (231 aa).

Active-site residues include Cys118, Asp167, and His199.

This sequence belongs to the dienelactone hydrolase family.

The enzyme catalyses 2-(5-oxo-2,5-dihydrofuran-2-ylidene)acetate + H2O = 4-oxohex-2-enedioate + H(+). In Aquifex aeolicus (strain VF5), this protein is Putative carboxymethylenebutenolidase.